The chain runs to 210 residues: Ribonuclease HII (210 aa).

Positions 2–203 (SGVMGIDEAG…YKRVESEVKQ (202 aa)) constitute an RNase H type-2 domain. Positions 8, 9, and 99 each coordinate a divalent metal cation.

This sequence belongs to the RNase HII family. It depends on Mn(2+) as a cofactor. Mg(2+) serves as cofactor.

The protein resides in the cytoplasm. The catalysed reaction is Endonucleolytic cleavage to 5'-phosphomonoester.. Functionally, endonuclease that specifically degrades the RNA of RNA-DNA hybrids. In Methanopyrus kandleri (strain AV19 / DSM 6324 / JCM 9639 / NBRC 100938), this protein is Ribonuclease HII.